The sequence spans 906 residues: Protein translocase subunit SecA (906 aa).

ATP contacts are provided by residues Gln-86, 104 to 108, and Asp-499; that span reads GEGKT. The tract at residues 862–886 is disordered; the sequence is KPVVSRIDPKDRNPDDPTSWGRVSR. Zn(2+) contacts are provided by Cys-890, Cys-892, Cys-901, and His-902.

It belongs to the SecA family. In terms of assembly, monomer and homodimer. Part of the essential Sec protein translocation apparatus which comprises SecA, SecYEG and auxiliary proteins SecDF-YajC and YidC. It depends on Zn(2+) as a cofactor.

Its subcellular location is the cell inner membrane. The protein localises to the cytoplasm. The enzyme catalyses ATP + H2O + cellular proteinSide 1 = ADP + phosphate + cellular proteinSide 2.. In terms of biological role, part of the Sec protein translocase complex. Interacts with the SecYEG preprotein conducting channel. Has a central role in coupling the hydrolysis of ATP to the transfer of proteins into and across the cell membrane, serving both as a receptor for the preprotein-SecB complex and as an ATP-driven molecular motor driving the stepwise translocation of polypeptide chains across the membrane. The chain is Protein translocase subunit SecA from Rickettsia africae (strain ESF-5).